We begin with the raw amino-acid sequence, 544 residues long: Probable protein kinase UbiB (544 aa).

One can recognise a Protein kinase domain in the interval 123–501 (EFDIKPLASA…KRQQATGKFL (379 aa)). Residues 129 to 137 (LASASIAQV) and Lys152 contribute to the ATP site. The active-site Proton acceptor is Asp287. 2 helical membrane-spanning segments follow: residues 496 to 516 (ATGK…AILV) and 519 to 539 (AYEQ…LLSW).

Belongs to the ABC1 family. UbiB subfamily.

The protein localises to the cell inner membrane. The protein operates within cofactor biosynthesis; ubiquinone biosynthesis [regulation]. Is probably a protein kinase regulator of UbiI activity which is involved in aerobic coenzyme Q (ubiquinone) biosynthesis. The polypeptide is Probable protein kinase UbiB (Vibrio campbellii (strain ATCC BAA-1116)).